A 448-amino-acid chain; its full sequence is MCSPGRAPPGPAPAGDLPPEWETDDERMAFLFSAFKQSREVNSTEWDSKMAFWVGLVLARGRRRGVVRTCLRELQNGFERRGSVPLGLGTVLRELLRRGKMQRESDFMASVDSSWISWGVGVFILKPLKWTLSSVLGDSKVPEEEEVLIYVELLQEKAEEVYRLYQNSVLSSHPVVALSELRSLCAGVCPDERTFYLLLLQLQKEKKVTILEQNGEKIVKFARGLHAKVSPMNDVDIGVYQLMQSEQLLSQKVESLSQEAEKCKDDARSACRAGKKQLALRCLKSKRRTERRIEELHSKLDAVQGILDRIYASQTDQMVFNAYQAGVGALKLSMKDVTVEKAENLVDQIQELCDTQDEVAQTLAGAGVNGLEMDSEELEKELDSLLQDSAKEPVHLHPVPQKDSGFAGAISDAELEAELEKLSVCDGDLAQKTPSASSEPQTALGLNL.

Residues 1–12 (MCSPGRAPPGPA) show a composition bias toward pro residues. Residues 1 to 20 (MCSPGRAPPGPAPAGDLPPE) are disordered. Positions 241-392 (QLMQSEQLLS…DSLLQDSAKE (152 aa)) form a coiled coil.

The protein belongs to the SNF7 family.

It localises to the cytoplasm. It is found in the nucleus envelope. ESCRT-III-like protein required to recruit the ESCRT-III complex to the nuclear envelope (NE) during late anaphase. Together with SPAST, the ESCRT-III complex promotes NE sealing and mitotic spindle disassembly during late anaphase. Recruited to the reforming NE during anaphase by LEMD2. Plays a role in the endosomal sorting pathway. The chain is Charged multivesicular body protein 7 (CHMP7) from Gallus gallus (Chicken).